The primary structure comprises 342 residues: UDP-N-acetylenolpyruvoylglucosamine reductase (342 aa).

In terms of domain architecture, FAD-binding PCMH-type spans R17–D192. R168 is an active-site residue. S242 (proton donor) is an active-site residue. E338 is a catalytic residue.

Belongs to the MurB family. Requires FAD as cofactor.

It localises to the cytoplasm. The enzyme catalyses UDP-N-acetyl-alpha-D-muramate + NADP(+) = UDP-N-acetyl-3-O-(1-carboxyvinyl)-alpha-D-glucosamine + NADPH + H(+). Its pathway is cell wall biogenesis; peptidoglycan biosynthesis. Cell wall formation. In Ralstonia nicotianae (strain ATCC BAA-1114 / GMI1000) (Ralstonia solanacearum), this protein is UDP-N-acetylenolpyruvoylglucosamine reductase.